Consider the following 2055-residue polypeptide: Multiple PDZ domain protein (2055 aa).

The L27 domain occupies 1–63; it reads MLETIDKNRA…SLQQLKDQVN (63 aa). Residues 138–225 enclose the PDZ 1 domain; it reads IFELLKPPCG…TVQLVIARGS (88 aa). S231 carries the phosphoserine modification. Positions 258–338 constitute a PDZ 2 domain; that stretch reads TIELVNDGSG…RVKLMIARGA (81 aa). Over residues 348 to 360 the composition is skewed to low complexity; it reads LGITLSSSTSSTS. Residues 348–372 are disordered; the sequence is LGITLSSSTSSTSEMRVDASTQKND. PDZ domains lie at 378–464, 546–627, and 693–779; these read DVEL…MRKG, VAHV…CRRT, and SIEL…VAKP. Phosphoserine is present on residues S783 and S1066. One can recognise a PDZ 6 domain in the interval 996–1077; sequence TVTIAKGSSS…IGPDIKITYV (82 aa). The interval 1111–1130 is disordered; sequence PELPEREEGEGEESELQNAA. In terms of domain architecture, PDZ 7 spans 1139–1231; sequence RVELWREPSK…PVVFMVQSII (93 aa). R1158 carries the post-translational modification Omega-N-methylarginine. Over residues 1264 to 1274 the composition is skewed to polar residues; it reads LTTDQAPSQSE. A disordered region spans residues 1264-1299; the sequence is LTTDQAPSQSESETEKPALCNVPPSSPSVFSEMGSD. The 84-residue stretch at 1338–1421 folds into the PDZ 8 domain; the sequence is VIELEKGQSG…KVKIIFIRNA (84 aa). Residues 1435–1445 are compositionally biased toward low complexity; that stretch reads ADSPSSTSDSP. The disordered stretch occupies residues 1435-1459; that stretch reads ADSPSSTSDSPQNKEVEPCSTTSAS. A PDZ 9 domain is found at 1471–1552; it reads QLELPKDQGG…TVKLTVRAEN (82 aa). Positions 1557–1597 are disordered; that stretch reads AVPSSAVTVSGERKDNSQTPAVPAPDLEPIPSTSRSSTPAV. PDZ domains lie at 1614–1697 and 1710–1792; these read TIEI…YRDE and TIEL…GRVK. Residues 1795-1834 are disordered; it reads PFHSERRPSQSSQVSESSLSSFTPPLSGINTSESLESNSK. S1803 and S1809 each carry phosphoserine. A compositionally biased stretch (low complexity) spans 1803–1815; the sequence is SQSSQVSESSLSS. Over residues 1816 to 1834 the composition is skewed to polar residues; sequence FTPPLSGINTSESLESNSK. PDZ domains follow at residues 1847–1933 and 1972–2055; these read TVEI…VAGG and TITL…MVLS.

As to quaternary structure, interacts with CLDN5, DLG4, GRIN1, SYNGAP1, CAMK2A and CAMK2B, HTR2A, HTR2B, HTR2C, PLEKHA1/TAPP1 and PLEKHA2/TAPP2. Interacts with F11R/JAM, CLDN1, NG2, CXADR, CRB1, MPP4 and PALS1. Interacts with FAT4 (via cytoplasmic domain). Interacts with DLL1. As to expression, in the brain, it is strongly expressed in the choroid plexus. Within the hippocampal formation, strongest expression was seen in the soma of CA1-4 pyramidal cells. Expressed in most neocortical regions with the strongest expression in piriform cortex and amygdaloid nuclei but also detected in the subiculum and olfactory bulb. In the cerebellum, the highest level of expression was found in Purkinje cells. Moderately expressed in the granular layer and molecular layer. Expressed in the pontine nuclei, parts of spinal trigeminal nuclei, and the principal sensory trigeminal nuclei of the metencephalon. Expressed in all thalamic and hypothalamic nuclei, and the substantia nigra (at protein level). Ubiquitously expressed.

It is found in the cell membrane. Its subcellular location is the apical cell membrane. The protein localises to the postsynaptic density. It localises to the cell projection. The protein resides in the dendrite. It is found in the cell junction. Its subcellular location is the tight junction. The protein localises to the synapse. It localises to the synaptosome. Functionally, member of the NMDAR signaling complex that may play a role in control of AMPAR potentiation and synaptic plasticity in excitatory synapses. Promotes clustering of HT2RC at the cell surface. The protein is Multiple PDZ domain protein (Mpdz) of Mus musculus (Mouse).